A 426-amino-acid polypeptide reads, in one-letter code: Glutamate-1-semialdehyde 2,1-aminomutase (426 aa).

Lysine 265 bears the N6-(pyridoxal phosphate)lysine mark.

The protein belongs to the class-III pyridoxal-phosphate-dependent aminotransferase family. HemL subfamily. As to quaternary structure, homodimer. Pyridoxal 5'-phosphate serves as cofactor.

The protein resides in the cytoplasm. It carries out the reaction (S)-4-amino-5-oxopentanoate = 5-aminolevulinate. It participates in porphyrin-containing compound metabolism; protoporphyrin-IX biosynthesis; 5-aminolevulinate from L-glutamyl-tRNA(Glu): step 2/2. This chain is Glutamate-1-semialdehyde 2,1-aminomutase, found in Klebsiella pneumoniae subsp. pneumoniae (strain ATCC 700721 / MGH 78578).